The primary structure comprises 300 residues: NAD kinase (300 aa).

The active-site Proton acceptor is the D75. Residues 75–76 (DG), 149–150 (ND), R177, D179, 190–195 (TAYALS), A214, and Q248 contribute to the NAD(+) site.

This sequence belongs to the NAD kinase family. It depends on a divalent metal cation as a cofactor.

It is found in the cytoplasm. The catalysed reaction is NAD(+) + ATP = ADP + NADP(+) + H(+). In terms of biological role, involved in the regulation of the intracellular balance of NAD and NADP, and is a key enzyme in the biosynthesis of NADP. Catalyzes specifically the phosphorylation on 2'-hydroxyl of the adenosine moiety of NAD to yield NADP. The protein is NAD kinase of Burkholderia multivorans (strain ATCC 17616 / 249).